The following is a 219-amino-acid chain: Thiamine-phosphate synthase (219 aa).

4-amino-2-methyl-5-(diphosphooxymethyl)pyrimidine-binding positions include 44 to 48 and asparagine 79; that span reads QFREK. The Mg(2+) site is built by aspartate 80 and aspartate 99. Serine 117 lines the 4-amino-2-methyl-5-(diphosphooxymethyl)pyrimidine pocket. 143–145 is a binding site for 2-[(2R,5Z)-2-carboxy-4-methylthiazol-5(2H)-ylidene]ethyl phosphate; the sequence is TST. Lysine 146 provides a ligand contact to 4-amino-2-methyl-5-(diphosphooxymethyl)pyrimidine. Residues glycine 175 and 195–196 each bind 2-[(2R,5Z)-2-carboxy-4-methylthiazol-5(2H)-ylidene]ethyl phosphate; that span reads IS.

This sequence belongs to the thiamine-phosphate synthase family. It depends on Mg(2+) as a cofactor.

It carries out the reaction 2-[(2R,5Z)-2-carboxy-4-methylthiazol-5(2H)-ylidene]ethyl phosphate + 4-amino-2-methyl-5-(diphosphooxymethyl)pyrimidine + 2 H(+) = thiamine phosphate + CO2 + diphosphate. The enzyme catalyses 2-(2-carboxy-4-methylthiazol-5-yl)ethyl phosphate + 4-amino-2-methyl-5-(diphosphooxymethyl)pyrimidine + 2 H(+) = thiamine phosphate + CO2 + diphosphate. It catalyses the reaction 4-methyl-5-(2-phosphooxyethyl)-thiazole + 4-amino-2-methyl-5-(diphosphooxymethyl)pyrimidine + H(+) = thiamine phosphate + diphosphate. The protein operates within cofactor biosynthesis; thiamine diphosphate biosynthesis; thiamine phosphate from 4-amino-2-methyl-5-diphosphomethylpyrimidine and 4-methyl-5-(2-phosphoethyl)-thiazole: step 1/1. Its function is as follows. Condenses 4-methyl-5-(beta-hydroxyethyl)thiazole monophosphate (THZ-P) and 2-methyl-4-amino-5-hydroxymethyl pyrimidine pyrophosphate (HMP-PP) to form thiamine monophosphate (TMP). The sequence is that of Thiamine-phosphate synthase from Bacillus cereus (strain ZK / E33L).